The following is a 379-amino-acid chain: Inactive 2'-5'-oligoadenylate synthase 1B (379 aa).

Residues 1-355 (MEQELRSIPA…VPTEVDIPSQ (355 aa)) lie on the Cytoplasmic side of the membrane. A helical; Anchor for type IV membrane protein transmembrane segment spans residues 356–374 (NYFFHIICLIFWLLLRLIF). Topologically, residues 375 to 379 (GKHSV) are extracellular.

The protein belongs to the 2-5A synthase family. In terms of assembly, interacts with OSBPL1A and ABCF3. As to expression, highly expressed in the brain, liver, spleen and heart.

The protein localises to the endoplasmic reticulum membrane. Functionally, does not have 2'-5'-OAS activity, but can bind double-stranded RNA. Displays antiviral activity against viruses via an alternative antiviral pathway independent of RNase L. The polypeptide is Inactive 2'-5'-oligoadenylate synthase 1B (Oas1b) (Rattus norvegicus (Rat)).